Here is a 357-residue protein sequence, read N- to C-terminus: Protein FAM118A (357 aa).

At Met-1 the chain carries N-acetylmethionine. A helical transmembrane segment spans residues 30–46 (LLLVIGTGVSAAVAPGI). Ser-311 carries the post-translational modification Phosphoserine.

The protein belongs to the FAM118 family.

Its subcellular location is the membrane. This Mus musculus (Mouse) protein is Protein FAM118A (Fam118a).